The following is a 308-amino-acid chain: UDP-N-acetylenolpyruvoylglucosamine reductase (308 aa).

Residues 32–196 (VGGPAARLYK…ISAKLQLSPG (165 aa)) enclose the FAD-binding PCMH-type domain. The active site involves Arg-176. Ser-225 functions as the Proton donor in the catalytic mechanism. Glu-296 is an active-site residue.

This sequence belongs to the MurB family. Requires FAD as cofactor.

The protein resides in the cytoplasm. It catalyses the reaction UDP-N-acetyl-alpha-D-muramate + NADP(+) = UDP-N-acetyl-3-O-(1-carboxyvinyl)-alpha-D-glucosamine + NADPH + H(+). The protein operates within cell wall biogenesis; peptidoglycan biosynthesis. Cell wall formation. This is UDP-N-acetylenolpyruvoylglucosamine reductase from Legionella pneumophila (strain Lens).